The following is a 100-amino-acid chain: Urease subunit gamma (100 aa).

Belongs to the urease gamma subunit family. In terms of assembly, heterotrimer of UreA (gamma), UreB (beta) and UreC (alpha) subunits. Three heterotrimers associate to form the active enzyme.

It is found in the cytoplasm. It catalyses the reaction urea + 2 H2O + H(+) = hydrogencarbonate + 2 NH4(+). Its pathway is nitrogen metabolism; urea degradation; CO(2) and NH(3) from urea (urease route): step 1/1. In Alcanivorax borkumensis (strain ATCC 700651 / DSM 11573 / NCIMB 13689 / SK2), this protein is Urease subunit gamma.